The chain runs to 96 residues: uncharacterized protein (96 aa).

The HTH cro/C1-type domain occupies 38-91 (IEQLRKGTGLKIDDFARVLGVSVAMVKEWESRRVKPSSAELKLMRLIQANPALS). The H-T-H motif DNA-binding region spans 49-68 (IDDFARVLGVSVAMVKEWES).

This is an uncharacterized protein from Escherichia coli O157:H7.